Here is a 235-residue protein sequence, read N- to C-terminus: Phosphoribosylaminoimidazole-succinocarboxamide synthase (235 aa).

The protein belongs to the SAICAR synthetase family.

It carries out the reaction 5-amino-1-(5-phospho-D-ribosyl)imidazole-4-carboxylate + L-aspartate + ATP = (2S)-2-[5-amino-1-(5-phospho-beta-D-ribosyl)imidazole-4-carboxamido]succinate + ADP + phosphate + 2 H(+). The protein operates within purine metabolism; IMP biosynthesis via de novo pathway; 5-amino-1-(5-phospho-D-ribosyl)imidazole-4-carboxamide from 5-amino-1-(5-phospho-D-ribosyl)imidazole-4-carboxylate: step 1/2. The sequence is that of Phosphoribosylaminoimidazole-succinocarboxamide synthase from Streptococcus pneumoniae (strain JJA).